Here is a 483-residue protein sequence, read N- to C-terminus: Glutamate--tRNA ligase (483 aa).

The short motif at 9-19 is the 'HIGH' region element; that stretch reads PSPTGFLHIGN. The short motif at 253-257 is the 'KMSKS' region element; sequence KLSKR. Position 256 (lysine 256) interacts with ATP.

It belongs to the class-I aminoacyl-tRNA synthetase family. Glutamate--tRNA ligase type 1 subfamily. In terms of assembly, monomer.

It is found in the cytoplasm. It carries out the reaction tRNA(Glu) + L-glutamate + ATP = L-glutamyl-tRNA(Glu) + AMP + diphosphate. In terms of biological role, catalyzes the attachment of glutamate to tRNA(Glu) in a two-step reaction: glutamate is first activated by ATP to form Glu-AMP and then transferred to the acceptor end of tRNA(Glu). This Mycoplasma capricolum subsp. capricolum (strain California kid / ATCC 27343 / NCTC 10154) protein is Glutamate--tRNA ligase.